A 289-amino-acid chain; its full sequence is Orotidine 5'-phosphate decarboxylase (289 aa).

Lys97 (proton donor) is an active-site residue.

This sequence belongs to the OMP decarboxylase family. Type 2 subfamily.

It carries out the reaction orotidine 5'-phosphate + H(+) = UMP + CO2. Its pathway is pyrimidine metabolism; UMP biosynthesis via de novo pathway; UMP from orotate: step 2/2. The polypeptide is Orotidine 5'-phosphate decarboxylase (Petrotoga mobilis (strain DSM 10674 / SJ95)).